The primary structure comprises 1374 residues: DNA-directed RNA polymerase subunit beta (1374 aa).

Belongs to the RNA polymerase beta chain family. As to quaternary structure, the RNAP catalytic core consists of 2 alpha, 1 beta, 1 beta' and 1 omega subunit. When a sigma factor is associated with the core the holoenzyme is formed, which can initiate transcription.

It catalyses the reaction RNA(n) + a ribonucleoside 5'-triphosphate = RNA(n+1) + diphosphate. In terms of biological role, DNA-dependent RNA polymerase catalyzes the transcription of DNA into RNA using the four ribonucleoside triphosphates as substrates. This Rickettsia prowazekii (strain Madrid E) protein is DNA-directed RNA polymerase subunit beta.